The chain runs to 288 residues: Quinate/shikimate dehydrogenase (288 aa).

Positions 71 and 107 each coordinate substrate. NAD(+) contacts are provided by residues 132-135 (AGGA), 155-158 (NRRD), K205, 232-235 (CVYN), and G255.

Belongs to the shikimate dehydrogenase family. As to quaternary structure, homodimer.

It carries out the reaction L-quinate + NAD(+) = 3-dehydroquinate + NADH + H(+). The catalysed reaction is L-quinate + NADP(+) = 3-dehydroquinate + NADPH + H(+). It catalyses the reaction shikimate + NADP(+) = 3-dehydroshikimate + NADPH + H(+). The enzyme catalyses shikimate + NAD(+) = 3-dehydroshikimate + NADH + H(+). Its pathway is metabolic intermediate biosynthesis; chorismate biosynthesis; chorismate from D-erythrose 4-phosphate and phosphoenolpyruvate: step 4/7. In terms of biological role, the actual biological function of YdiB remains unclear, nor is it known whether 3-dehydroshikimate or quinate represents the natural substrate. Catalyzes the reversible NAD-dependent reduction of both 3-dehydroshikimate (DHSA) and 3-dehydroquinate to yield shikimate (SA) and quinate, respectively. It can use both NAD or NADP for catalysis, however it has higher catalytic efficiency with NAD. The polypeptide is Quinate/shikimate dehydrogenase (Shigella flexneri).